The following is a 418-amino-acid chain: Putative methylthiotransferase HP_0285 (418 aa).

The 109-residue stretch at 2–110 (KKVYFKTFGC…INALLQEKKR (109 aa)) folds into the MTTase N-terminal domain. Residues C11, C45, C74, C144, C148, and C151 each coordinate [4Fe-4S] cluster. The Radical SAM core domain occupies 130 to 355 (FVGKTRAFIK…KDLIFHKNKA (226 aa)).

Belongs to the methylthiotransferase family. It depends on [4Fe-4S] cluster as a cofactor.

This is Putative methylthiotransferase HP_0285 from Helicobacter pylori (strain ATCC 700392 / 26695) (Campylobacter pylori).